A 207-amino-acid chain; its full sequence is LexA repressor (207 aa).

Positions 28-48 form a DNA-binding region, H-T-H motif; that stretch reads VREIGEAVGLASSSTVHGHLS. Catalysis depends on for autocatalytic cleavage activity residues serine 130 and lysine 168.

Belongs to the peptidase S24 family. Homodimer.

It carries out the reaction Hydrolysis of Ala-|-Gly bond in repressor LexA.. In terms of biological role, represses a number of genes involved in the response to DNA damage (SOS response), including recA and lexA. In the presence of single-stranded DNA, RecA interacts with LexA causing an autocatalytic cleavage which disrupts the DNA-binding part of LexA, leading to derepression of the SOS regulon and eventually DNA repair. This chain is LexA repressor, found in Staphylococcus carnosus (strain TM300).